A 156-amino-acid chain; its full sequence is Ribosome maturation factor RimP (156 aa).

This sequence belongs to the RimP family.

It localises to the cytoplasm. Required for maturation of 30S ribosomal subunits. This Treponema pallidum (strain Nichols) protein is Ribosome maturation factor RimP.